The sequence spans 477 residues: UDP-N-acetylmuramate--L-alanine ligase (477 aa).

118-124 (GTHGKTS) contributes to the ATP binding site.

It belongs to the MurCDEF family.

Its subcellular location is the cytoplasm. It carries out the reaction UDP-N-acetyl-alpha-D-muramate + L-alanine + ATP = UDP-N-acetyl-alpha-D-muramoyl-L-alanine + ADP + phosphate + H(+). The protein operates within cell wall biogenesis; peptidoglycan biosynthesis. Its function is as follows. Cell wall formation. The chain is UDP-N-acetylmuramate--L-alanine ligase from Corynebacterium diphtheriae (strain ATCC 700971 / NCTC 13129 / Biotype gravis).